Consider the following 153-residue polypeptide: Ribosome maturation factor RimP (153 aa).

Belongs to the RimP family.

It is found in the cytoplasm. Required for maturation of 30S ribosomal subunits. This chain is Ribosome maturation factor RimP, found in Clostridium botulinum (strain Kyoto / Type A2).